A 200-amino-acid polypeptide reads, in one-letter code: Protein Nef (200 aa).

Residue Gly2 is the site of N-myristoyl glycine; by host attachment. Position 6 is a phosphoserine; by host (Ser6). Residues 58–60 (EEE) are acidic; interacts with host PACS1 and PACS2; stabilizes the interaction of NEF/MHC-I with host AP1M1; necessary for MHC-I internalization. Residues 64–73 (PVRPQVPLRP) are SH3-binding; interaction with Src family tyrosine kinases. The short motif at 67–70 (PQVP) is the PxxP; stabilizes the interaction of NEF/MHC-I with host AP1M1; necessary for MHC-I internalization element. The mediates dimerization, Nef-PTE1 interaction stretch occupies residues 103-119 (EILDLWVYHTQGYFPDW). A binding to ATP6V1H region spans residues 143-175 (VDPEEVEKANEGENNCLLHPMSLHGMEDDDKEV). Residues 159-160 (LL) carry the Dileucine internalization motif; necessary for CD4 internalization motif. Residues 169–170 (ED) carry the Diacidic; necessary for CD4 internalization motif.

It belongs to the lentivirus primate group Nef protein family. In terms of assembly, monomer; cytosolic form. Homodimer; membrane bound form. Interacts with Nef associated p21-activated kinase (PAK2); this interaction activates PAK2. Associates with the Nef-MHC-I-AP1 complex; this complex is required for MHC-I internalization. Interacts (via C-terminus) with host PI3-kinase. Interacts with host PACS1; this interaction seems to be weak. Interacts with host PACS2. Interacts with host LCK and MAPK3; these interactions inhibit the kinase activity of the latter. Interacts with host ATP6V1H; this interaction may play a role in CD4 endocytosis. Associates with the CD4-Nef-AP2 complex; this complex is required for CD4 internalization. Interacts with host AP2 subunit alpha and AP2 subunit sigma2. Interacts with TCR-zeta chain; this interaction up-regulates the Fas ligand (FasL) surface expression. Interacts with host HCK, LYN, and SRC; these interactions activate the Src family kinases. Interacts with MAP3K5; this interaction inhibits the Fas and TNFR-mediated death signals. Interacts with beta-COP and PTE1. Interacts with human RACK1; this increases Nef phosphorylation by PKC. Interacts with TP53; this interaction decreases the half-life of TP53, protecting the infected cell against p53-mediated apoptosis. Post-translationally, the virion-associated Nef proteins are cleaved by the viral protease to release the soluble C-terminal core protein. Nef is probably cleaved concomitantly with viral structural proteins on maturation of virus particles. Myristoylated. In terms of processing, phosphorylated on serine residues, probably by host PKCdelta and theta.

The protein resides in the host cell membrane. It is found in the virion. Its subcellular location is the secreted. It localises to the host Golgi apparatus membrane. In terms of biological role, factor of infectivity and pathogenicity, required for optimal virus replication. Alters numerous pathways of T-lymphocyte function and down-regulates immunity surface molecules in order to evade host defense and increase viral infectivity. Alters the functionality of other immunity cells, like dendritic cells, monocytes/macrophages and NK cells. In infected CD4(+) T-lymphocytes, down-regulates the surface MHC-I, mature MHC-II, CD4, CD28, CCR5 and CXCR4 molecules. Mediates internalization and degradation of host CD4 through the interaction of with the cytoplasmic tail of CD4, the recruitment of AP-2 (clathrin adapter protein complex 2), internalization through clathrin coated pits, and subsequent transport to endosomes and lysosomes for degradation. Diverts host MHC-I molecules to the trans-Golgi network-associated endosomal compartments by an endocytic pathway to finally target them for degradation. MHC-I down-regulation may involve AP-1 (clathrin adapter protein complex 1) or possibly Src family kinase-ZAP70/Syk-PI3K cascade recruited by PACS2. In consequence infected cells are masked for immune recognition by cytotoxic T-lymphocytes. Decreasing the number of immune receptors also prevents reinfection by more HIV particles (superinfection). Down-regulates host SERINC3 and SERINC5 thereby excluding these proteins from the viral particles. Virion infectivity is drastically higher when SERINC3 or SERINC5 are excluded from the viral envelope, because these host antiviral proteins impair the membrane fusion event necessary for subsequent virion penetration. Its function is as follows. Bypasses host T-cell signaling by inducing a transcriptional program nearly identical to that of anti-CD3 cell activation. Interaction with TCR-zeta chain up-regulates the Fas ligand (FasL). Increasing surface FasL molecules and decreasing surface MHC-I molecules on infected CD4(+) cells send attacking cytotoxic CD8+ T-lymphocytes into apoptosis. Functionally, plays a role in optimizing the host cell environment for viral replication without causing cell death by apoptosis. Protects the infected cells from apoptosis in order to keep them alive until the next virus generation is ready to strike. Inhibits the Fas and TNFR-mediated death signals by blocking MAP3K5/ASK1. Decreases the half-life of TP53, protecting the infected cell against p53-mediated apoptosis. Inhibits the apoptotic signals regulated by the Bcl-2 family proteins through the formation of a Nef/PI3-kinase/PAK2 complex that leads to activation of PAK2 and induces phosphorylation of host BAD. In terms of biological role, extracellular Nef protein targets CD4(+) T-lymphocytes for apoptosis by interacting with CXCR4 surface receptors. In Homo sapiens (Human), this protein is Protein Nef.